A 341-amino-acid chain; its full sequence is tRNA N6-adenosine threonylcarbamoyltransferase (341 aa).

Residues His111 and His115 each contribute to the Fe cation site. Substrate-binding positions include 134–138 (LVSGG), Asp167, Gly180, and Asn276. Asp304 lines the Fe cation pocket.

This sequence belongs to the KAE1 / TsaD family. It depends on Fe(2+) as a cofactor.

It is found in the cytoplasm. The enzyme catalyses L-threonylcarbamoyladenylate + adenosine(37) in tRNA = N(6)-L-threonylcarbamoyladenosine(37) in tRNA + AMP + H(+). In terms of biological role, required for the formation of a threonylcarbamoyl group on adenosine at position 37 (t(6)A37) in tRNAs that read codons beginning with adenine. Is involved in the transfer of the threonylcarbamoyl moiety of threonylcarbamoyl-AMP (TC-AMP) to the N6 group of A37, together with TsaE and TsaB. TsaD likely plays a direct catalytic role in this reaction. The chain is tRNA N6-adenosine threonylcarbamoyltransferase from Ectopseudomonas mendocina (strain ymp) (Pseudomonas mendocina).